A 693-amino-acid chain; its full sequence is Elongation factor G 1 (693 aa).

A tr-type G domain is found at 4 to 281; sequence NKLRNIGISA…AVTRFLPSPH (278 aa). Residues 13-20, 80-84, and 134-137 each bind GTP; these read AHIDSGKT, DTPGH, and NKCD.

The protein belongs to the TRAFAC class translation factor GTPase superfamily. Classic translation factor GTPase family. EF-G/EF-2 subfamily.

Its subcellular location is the cytoplasm. Its function is as follows. Catalyzes the GTP-dependent ribosomal translocation step during translation elongation. During this step, the ribosome changes from the pre-translocational (PRE) to the post-translocational (POST) state as the newly formed A-site-bound peptidyl-tRNA and P-site-bound deacylated tRNA move to the P and E sites, respectively. Catalyzes the coordinated movement of the two tRNA molecules, the mRNA and conformational changes in the ribosome. The protein is Elongation factor G 1 of Borreliella afzelii (strain PKo) (Borrelia afzelii).